The following is a 130-amino-acid chain: Small ribosomal subunit protein uS9 (130 aa).

Residues 108–130 (SREVERKKVGLRKARKRPQYSKR) form a disordered region. Positions 116 to 130 (VGLRKARKRPQYSKR) are enriched in basic residues.

This sequence belongs to the universal ribosomal protein uS9 family.

This Cellvibrio japonicus (strain Ueda107) (Pseudomonas fluorescens subsp. cellulosa) protein is Small ribosomal subunit protein uS9.